The sequence spans 232 residues: Lipoprotein-releasing system ATP-binding protein LolD (232 aa).

One can recognise an ABC transporter domain in the interval 6-231; sequence ISCENLNKVY…KLTIKESQHV (226 aa). 42–49 lines the ATP pocket; that stretch reads GSSGSGKS.

It belongs to the ABC transporter superfamily. Lipoprotein translocase (TC 3.A.1.125) family. In terms of assembly, the complex is composed of two ATP-binding proteins (LolD) and two transmembrane proteins (LolC and LolE).

It localises to the cell inner membrane. In terms of biological role, part of the ABC transporter complex LolCDE involved in the translocation of mature outer membrane-directed lipoproteins, from the inner membrane to the periplasmic chaperone, LolA. Responsible for the formation of the LolA-lipoprotein complex in an ATP-dependent manner. The sequence is that of Lipoprotein-releasing system ATP-binding protein LolD from Pseudoalteromonas translucida (strain TAC 125).